Reading from the N-terminus, the 160-residue chain is Phosphopantetheine adenylyltransferase (160 aa).

Position 9 (Ser9) interacts with substrate. Residues 9–10 (SL) and His17 each bind ATP. Residues Lys41, Leu74, and Lys88 each contribute to the substrate site. Residues 89 to 91 (GIR), Glu99, and 123 to 129 (YLHLSST) each bind ATP.

It belongs to the bacterial CoaD family. As to quaternary structure, homohexamer. The cofactor is Mg(2+).

The protein localises to the cytoplasm. The catalysed reaction is (R)-4'-phosphopantetheine + ATP + H(+) = 3'-dephospho-CoA + diphosphate. The protein operates within cofactor biosynthesis; coenzyme A biosynthesis; CoA from (R)-pantothenate: step 4/5. Its function is as follows. Reversibly transfers an adenylyl group from ATP to 4'-phosphopantetheine, yielding dephospho-CoA (dPCoA) and pyrophosphate. This Renibacterium salmoninarum (strain ATCC 33209 / DSM 20767 / JCM 11484 / NBRC 15589 / NCIMB 2235) protein is Phosphopantetheine adenylyltransferase.